The following is a 239-amino-acid chain: Protein GrpE (239 aa).

Disordered regions lie at residues 1–56 and 208–239; these read MIEN…KNTI and SMGP…SEDV. The segment covering 40 to 53 has biased composition (basic and acidic residues); sequence TSQKKEAINTEELK. The span at 224–239 shows a compositional bias: acidic residues; that stretch reads TVEEDVNSEVNTSEDV.

The protein belongs to the GrpE family. As to quaternary structure, homodimer.

The protein localises to the cytoplasm. Participates actively in the response to hyperosmotic and heat shock by preventing the aggregation of stress-denatured proteins, in association with DnaK and GrpE. It is the nucleotide exchange factor for DnaK and may function as a thermosensor. Unfolded proteins bind initially to DnaJ; upon interaction with the DnaJ-bound protein, DnaK hydrolyzes its bound ATP, resulting in the formation of a stable complex. GrpE releases ADP from DnaK; ATP binding to DnaK triggers the release of the substrate protein, thus completing the reaction cycle. Several rounds of ATP-dependent interactions between DnaJ, DnaK and GrpE are required for fully efficient folding. The protein is Protein GrpE of Prochlorococcus marinus (strain MIT 9215).